The primary structure comprises 440 residues: Coenzyme A disulfide reductase (440 aa).

8 to 33 is a binding site for FAD; the sequence is GAVAGGATCASQIRRLDKDSEITIFE. Substrate-binding residues include Thr-15, Gln-19, Arg-22, Ser-39, and Asn-42. The Nucleophile role is filled by Cys-43. Cys-43 (redox-active) is an active-site residue. Lys-71 serves as a coordination point for substrate. NADP(+) is bound at residue 151–166; it reads ALVVGAGYISLEVLEN. 267–277 contacts FAD; it reads TNIPNIYALGD. Residue His-299 participates in substrate binding. Tyr-419 lines the FAD pocket. Substrate is bound at residue Lys-427.

The protein belongs to the class-III pyridine nucleotide-disulfide oxidoreductase family. As to quaternary structure, homodimer. The cofactor is FAD.

The enzyme catalyses NADP(+) + 2 CoA = CoA-disulfide + NADPH + H(+). Functionally, catalyzes specifically the NADPH-dependent reduction of coenzyme A disulfide. In Staphylococcus haemolyticus (strain JCSC1435), this protein is Coenzyme A disulfide reductase.